A 209-amino-acid polypeptide reads, in one-letter code: Abscisic acid receptor PYL5 (209 aa).

Residues 44–196 are START-like; the sequence is HAPGEHQCSS…NLTSLAEVSE (153 aa). A disulfide bond links Cys-51 and Cys-177. Abscisate-binding positions include Lys-80, 109 to 114, 136 to 142, and Glu-161; these read ATTSTE and RLRNYSS. Positions 105–109 match the Gate loop motif; the sequence is TGLPA. Positions 135 to 137 match the Latch loop motif; sequence HRL.

The protein belongs to the PYR/PYL/RCAR abscisic acid intracellular receptor family. Monomer. Interacts with PP2C30. Binding to PP2C30 is dependent on the presence of abscisic acid (ABA). Interacts with PP2C51. Binding to PP2C51 is dependent on the presence of ABA. Interacts with PP2C50. Binding to PP2C50 is dependent on the presence of ABA. Interacts with PP2C53. In terms of tissue distribution, expressed in leaf sheaths and leaf blades. Expressed at low levels in roots, flowers and seeds.

It localises to the nucleus. Its subcellular location is the cytoplasm. The protein resides in the cytosol. Intracellular abscisic acid (ABA) receptor that functions as a positive regulator of ABA signaling pathway. Together with ABI5, PP2C30 and SAPK2, is part of an ABA signaling unit that modulates seed germination and early seedling growth. Acts as a positive regulator of abiotic stress-responsive gene expression. Inhibits the protein phosphatases PP2C06 and PP2C09 when activated by ABA. This Oryza sativa subsp. japonica (Rice) protein is Abscisic acid receptor PYL5.